The following is a 392-amino-acid chain: DNA polymerase IV (392 aa).

A UmuC domain is found at 6 to 186 (IVHLDADAFF…LPIGKLPGVG (181 aa)). Residues aspartate 10 and aspartate 103 each contribute to the Mg(2+) site. Glutamate 104 is an active-site residue.

This sequence belongs to the DNA polymerase type-Y family. In terms of assembly, monomer. Requires Mg(2+) as cofactor.

It localises to the cytoplasm. The catalysed reaction is DNA(n) + a 2'-deoxyribonucleoside 5'-triphosphate = DNA(n+1) + diphosphate. Functionally, poorly processive, error-prone DNA polymerase involved in untargeted mutagenesis. Copies undamaged DNA at stalled replication forks, which arise in vivo from mismatched or misaligned primer ends. These misaligned primers can be extended by PolIV. Exhibits no 3'-5' exonuclease (proofreading) activity. May be involved in translesional synthesis, in conjunction with the beta clamp from PolIII. This is DNA polymerase IV from Opitutus terrae (strain DSM 11246 / JCM 15787 / PB90-1).